Reading from the N-terminus, the 151-residue chain is Prefoldin subunit alpha (151 aa).

It belongs to the prefoldin subunit alpha family. As to quaternary structure, heterohexamer of two alpha and four beta subunits.

The protein localises to the cytoplasm. In terms of biological role, molecular chaperone capable of stabilizing a range of proteins. Seems to fulfill an ATP-independent, HSP70-like function in archaeal de novo protein folding. In Sulfurisphaera tokodaii (strain DSM 16993 / JCM 10545 / NBRC 100140 / 7) (Sulfolobus tokodaii), this protein is Prefoldin subunit alpha.